Consider the following 469-residue polypeptide: GTPase Der (469 aa).

2 EngA-type G domains span residues 3-166 and 177-350; these read PVIA…PEDE and LRLA…ESAN. GTP contacts are provided by residues 9–16, 56–60, 118–121, 183–190, 230–234, and 295–298; these read GRPNVGKS, DTGGI, NKVD, DTAGV, and NKWD. The 85-residue stretch at 351–435 folds into the KH-like domain; that stretch reads LKVSPAKLTQ…PVKIEFKTSE (85 aa).

The protein belongs to the TRAFAC class TrmE-Era-EngA-EngB-Septin-like GTPase superfamily. EngA (Der) GTPase family. Associates with the 50S ribosomal subunit.

Its function is as follows. GTPase that plays an essential role in the late steps of ribosome biogenesis. The sequence is that of GTPase Der from Acinetobacter baumannii (strain ACICU).